Here is a 172-residue protein sequence, read N- to C-terminus: C-phycocyanin beta chain (172 aa).

N72 carries the N4-methylasparagine modification. C82 and C153 together coordinate (2R,3E)-phycocyanobilin.

This sequence belongs to the phycobiliprotein family. In terms of assembly, heterodimer of an alpha and a beta subunit, which further assembles into trimers and the trimers into hexamers. The basic functional unit of phycobiliproteins is a ring-shaped hexamer formed from two back-to-back trimers contacting via the alpha chain subunits. The trimers are composed of alpha/beta subunit heterodimers arranged around a three-fold axis of symmetry. The phycoerythrins also contain a gamma subunit which is located in the center of the hexamer. Contains two covalently linked phycocyanobilin chromophores.

The protein resides in the plastid. It localises to the cyanelle thylakoid membrane. Its function is as follows. Light-harvesting photosynthetic bile pigment-protein from the phycobiliprotein complex (phycobilisome, PBS). Phycocyanin is the major phycobiliprotein in the PBS rod. This is C-phycocyanin beta chain (cpcB) from Cyanophora paradoxa.